We begin with the raw amino-acid sequence, 131 residues long: Small ribosomal subunit protein bS6 (131 aa).

The tract at residues 98-131 is disordered; it reads EASPMVKAKDERRERREDFANETADDSEAGDSEE. Residues 104-116 are compositionally biased toward basic and acidic residues; the sequence is KAKDERRERREDF. Over residues 120–131 the composition is skewed to acidic residues; it reads TADDSEAGDSEE.

This sequence belongs to the bacterial ribosomal protein bS6 family.

Its function is as follows. Binds together with bS18 to 16S ribosomal RNA. In Klebsiella pneumoniae (strain 342), this protein is Small ribosomal subunit protein bS6.